We begin with the raw amino-acid sequence, 741 residues long: NUT family member 2G (741 aa).

5 disordered regions span residues 172 to 200, 293 to 375, 391 to 424, 496 to 624, and 638 to 741; these read PGNA…PDDS, IQKS…PEEI, LGSH…SDPG, RAAP…LPGM, and RLSQ…HCSQ. Residues 304-321 are compositionally biased toward pro residues; that stretch reads SLPPPAPPRLEPRGPPAP. Residues 402–412 show a composition bias toward basic and acidic residues; that stretch reads EGQREKGKVEQ. A compositionally biased stretch (polar residues) spans 528–545; it reads QRVSVETSPPQTAAQDPQ. Low complexity predominate over residues 639-650; it reads LSQSPVPSSGLL. Positions 731–741 are enriched in basic residues; that stretch reads SRRKKKRHCSQ.

The protein belongs to the NUT family.

This is NUT family member 2G (NUTM2G) from Homo sapiens (Human).